The following is a 97-amino-acid chain: Large ribosomal subunit protein uL23 (97 aa).

The protein belongs to the universal ribosomal protein uL23 family. Part of the 50S ribosomal subunit. Contacts protein L29, and trigger factor when it is bound to the ribosome.

Functionally, one of the early assembly proteins it binds 23S rRNA. One of the proteins that surrounds the polypeptide exit tunnel on the outside of the ribosome. Forms the main docking site for trigger factor binding to the ribosome. This chain is Large ribosomal subunit protein uL23, found in Methylococcus capsulatus (strain ATCC 33009 / NCIMB 11132 / Bath).